The chain runs to 283 residues: Pantothenate synthetase (283 aa).

33 to 40 (MGALHEGH) provides a ligand contact to ATP. His-40 acts as the Proton donor in catalysis. Position 64 (Gln-64) interacts with (R)-pantoate. Gln-64 is a beta-alanine binding site. 150–153 (GEKD) contacts ATP. A (R)-pantoate-binding site is contributed by Gln-156. ATP contacts are provided by residues Ile-179 and 187 to 190 (MSSR).

It belongs to the pantothenate synthetase family. Homodimer.

It localises to the cytoplasm. The enzyme catalyses (R)-pantoate + beta-alanine + ATP = (R)-pantothenate + AMP + diphosphate + H(+). The protein operates within cofactor biosynthesis; (R)-pantothenate biosynthesis; (R)-pantothenate from (R)-pantoate and beta-alanine: step 1/1. Functionally, catalyzes the condensation of pantoate with beta-alanine in an ATP-dependent reaction via a pantoyl-adenylate intermediate. The chain is Pantothenate synthetase from Mesorhizobium japonicum (strain LMG 29417 / CECT 9101 / MAFF 303099) (Mesorhizobium loti (strain MAFF 303099)).